Here is a 583-residue protein sequence, read N- to C-terminus: Putative glutaminase 3 (583 aa).

A disordered region spans residues 1-29 (MDNKEKEDEELSDELKDQPGPSEKPRTPT). 7 residues coordinate substrate: Ser-216, Asn-265, Glu-311, Asn-318, Tyr-344, Tyr-396, and Val-414. ANK repeat units follow at residues 482-514 (DGQNRFMYATKLGDIAAIKRFLLMGHDIHCKDY), 515-548 (DDRTVLHVAAAEGDVVTLEYVLSKWQEDPNPCDR), and 549-581 (YDRTPLDDAKHFNHTACVKLLEEAITVYNLKGQ).

Belongs to the glutaminase family.

The enzyme catalyses L-glutamine + H2O = L-glutamate + NH4(+). This is Putative glutaminase 3 (glna-3) from Caenorhabditis elegans.